A 501-amino-acid chain; its full sequence is Aldehyde dehydrogenase, cytosolic 1 (501 aa).

246 to 251 (GSTEVG) serves as a coordination point for NAD(+). The active-site Proton acceptor is Glu269. Residue Cys303 is the Nucleophile of the active site.

This sequence belongs to the aldehyde dehydrogenase family. In terms of assembly, homotetramer. In terms of tissue distribution, eye specific, with very high expression in the lens.

It localises to the cytoplasm. The catalysed reaction is an aldehyde + NAD(+) + H2O = a carboxylate + NADH + 2 H(+). It functions in the pathway alcohol metabolism; ethanol degradation; acetate from ethanol: step 2/2. Its function is as follows. Major component of the eye of elephant shrews, which in contrast to other mammals, possesses both a lens- and a non-lens class-1 aldehyde dehydrogenase 1. This eye-specific form is a structural protein of the lens and, in other part of the eye, serves as the major form of ALDH1. Can convert/oxidize retinaldehyde to retinoic acid. The protein is Aldehyde dehydrogenase, cytosolic 1 (ALDH1) of Macroscelides proboscideus (Short-eared elephant shrew).